An 808-amino-acid chain; its full sequence is Zinc finger protein 148 (808 aa).

Disordered regions lie at residues 15–86 and 131–162; these read SPVG…ISQD and DSLI…SPAK. A compositionally biased stretch (acidic residues) spans 56 to 73; that stretch reads AEDDDDEDEEEDDDDDLA. Residues 150 to 159 are compositionally biased toward basic residues; it reads HKKKKRKQRS. 4 consecutive C2H2-type zinc fingers follow at residues 180 to 202, 208 to 230, 236 to 258, and 264 to 287; these read HICE…VFIH, FQCN…EKIH, FRCD…KRTH, and YQCD…RMCH. 3 disordered regions span residues 305-338, 596-617, and 705-736; these read RTPE…ASIT, SINS…QAPP, and SFSG…DPQS. 2 stretches are compositionally biased toward polar residues: residues 705-718 and 725-736; these read SFSG…SVSP and QVTSPKKTDPQS.

The protein belongs to the krueppel C2H2-type zinc-finger protein family.

It localises to the nucleus. Involved in transcriptional regulation. Represses the transcription of a number of genes. Required for primitive and definitive hematopoiesis during embryonic development. This chain is Zinc finger protein 148 (znf148), found in Danio rerio (Zebrafish).